The chain runs to 403 residues: MDRLTVRDLSPEEKKVLVRVDFNVPIKDGKILDDIRIRSAMPTINYLLQKRAAVILMSHLGRPRGSGFEEKYSLQPVVEVLEGYLGHHVPLAPDCIGEVARQAVAQLSPGRVLILENLRFHRGEEHPEEDPAFAAELSSYGDFYVNDAFGTSHRKHTSVYTVPQAFPGRCAAGLLMEKELEFLGTHLLISPKRPFTAILGGAKVSSKIGVIEALLSQVDNLLLAGGMGYTFLKALGKSVGNSLVEESGIELATRVLQIAKQRNVRIVLPVDAKVAKTCDSGVSWSEVSINQGIPADLEGLDIGTQTIQEFCKIIDASATVFWNGPVGVYEVPPFDQGSMAIANCLARHPSATTVVGGGDAAAVIALAGCSSQVSHVSTGGGASLEFLEKGFLPGTEVLSPTRG.

Substrate-binding positions include 21 to 23 (DFN), Arg-36, 59 to 62 (HLGR), Arg-119, and Arg-154. Residues Lys-207, Gly-299, Glu-330, and 357–360 (GGDA) each bind ATP.

The protein belongs to the phosphoglycerate kinase family. As to quaternary structure, monomer.

The protein resides in the cytoplasm. It catalyses the reaction (2R)-3-phosphoglycerate + ATP = (2R)-3-phospho-glyceroyl phosphate + ADP. It functions in the pathway carbohydrate degradation; glycolysis; pyruvate from D-glyceraldehyde 3-phosphate: step 2/5. This Chlamydia felis (strain Fe/C-56) (Chlamydophila felis) protein is Phosphoglycerate kinase.